Reading from the N-terminus, the 780-residue chain is Cyclin-F (780 aa).

The Nuclear localization signal 1 motif lies at 20 to 28; sequence KRRIKRRPR. The 48-residue stretch at 29–76 folds into the F-box domain; that stretch reads NLTILSLPEDVLFHILKWLSVGDILAVRAVHSHLKYLVDNHASVWASA. Residues 288–405 form the Cyclin N-terminal domain; the sequence is QASQAVNKQQ…EIISALEGKI (118 aa). 3 consecutive short sequence motifs (d box) follow at residues 310–313, 343–346, and 349–352; these read RYIL, RRRL, and RYKL. 3 disordered regions span residues 544-594, 651-733, and 745-780; these read QESP…AELS, QESS…STKP, and CRPP…FLKL. Positions 568–574 match the Nuclear localization signal 2 motif; that stretch reads RRSKRKR. Residues 582-761 form a PEST region; sequence RGSFVTTPTA…ESGAHQQPVK (180 aa). The span at 585–594 shows a compositional bias: polar residues; the sequence is FVTTPTAELS. Low complexity-rich tracts occupy residues 695–708 and 719–731; these read SGYS…PISS and STSV…HSST. The D box 4 signature appears at 762-765; that stretch reads RQNL.

Belongs to the cyclin family. Cyclin AB subfamily. As to quaternary structure, component of the SCF(CCNF) complex consisting of CUL1, RBX1, SKP1 and CCNF. Interacts with SKP1. Interacts with CUL1. Interacts with CCNB1; interaction is required for nuclear localization of CCNB1. Interacts with CCP110; this interaction leads to CCP110 ubiquitination and degradation via the proteasome pathway. Interacts (via the Cyclin N-terminal domain) with MYBL2/BMYB. Interacts with FZR1/CDH1 (via N-terminus). Interacts with RRM2 (via Cy motif and when phosphorylated at 'Thr-33'); the interaction occurs exclusively in G2 and early M. Interacts with CDC6 (via Cy motif); the interaction takes place during G2 and M phase. In terms of processing, degraded when the spindle assembly checkpoint is activated during the G2-M transition. Degradation is not dependent on the proteasome or ubiquitin and depends on the C-terminal PEST sequence. Phosphorylated just before cells enter into mitosis. Post-translationally, ubiquitinated by the anaphase-promoting complex (APC/C); leading to its degradation by the proteasome.

Its subcellular location is the nucleus. It is found in the cytoplasm. The protein localises to the perinuclear region. It localises to the cytoskeleton. The protein resides in the microtubule organizing center. Its subcellular location is the centrosome. It is found in the centriole. Functionally, substrate recognition component of a SCF (SKP1-CUL1-F-box protein) E3 ubiquitin-protein ligase complex which mediates the ubiquitination and subsequent proteasomal degradation of target proteins. The SCF(CCNF) E3 ubiquitin-protein ligase complex is an integral component of the ubiquitin proteasome system (UPS) and links proteasome degradation to the cell cycle. Mediates the substrate recognition and the proteasomal degradation of various target proteins involved in the regulation of cell cycle progression and in the maintenance of genome stability. Mediates the ubiquitination and subsequent proteasomal degradation of CP110 during G2 phase, thereby acting as an inhibitor of centrosome reduplication. In G2, mediates the ubiquitination and proteasomal degradation of CDC6, thereby suppressing DNA re-replication and preventing genome instability. Involved in the ubiquitination and degradation of the substrate adapter CDH1 of the anaphase-promoting complex (APC/C), thereby acting as an antagonist of APC/C in regulating G1 progression and S phase entry. May play a role in the G2 cell cycle checkpoint control after DNA damage, possibly by promoting the ubiquitination of MYBL2/BMYB. The polypeptide is Cyclin-F (Ccnf) (Rattus norvegicus (Rat)).